Reading from the N-terminus, the 615-residue chain is MAEKFAEKTFTDPSRIRNFCIIAHIDHGKSTLADRILQLSNVVDARDMRAQYLDNMDIERERGITIKAQNVRLPWIPRSGEYEGQEIVMQMIDTPGHVDFTYEVSRALEACEGAILLVDAAQGIEAQTLANLYLAMENDLEIIPVLNKIDLPAADPDKYALEIANIVGCEPEDVLRVSGKTGVGVPELLDKVVELIPAPSPGPSEDAPARAMIFDSVYDTYRGVVTYIRVMEGRLTPRQKIKMMSTGATHELLEIGIVSPTPKKCEGLGPGEVGYLITGVKDVRQSKVGDTVTWAHNGAEEPLQGYQEPTPMVYSGLFPVSQADFPDLRDALEKLQLNDASLTYEPETSVALGFGFRCGFLGLLHMEITRDRLEREFDLDLISTAPSVNYRVVDEAGQEHRVHNPSDWPGGKLREIYEPIVKVTIIVPSEFVGPTMELCQAKRGQMGGMDYLSEDRVELRYIMPLGEIIFDFFDMLKSRTKGYASLNYEEAGEQEADLVKVDILLQGEPVDAFSAIVHRDNAQWYGNKMTVKLKSLIPRQQFEVPIQAAVGSRIIARENIRALRKDVLAKCYGGDISRKRKLLEKQKAGKKRMKNIGSVEVPQEAFVAALSTDEG.

The 187-residue stretch at 14 to 200 (SRIRNFCIIA…KVVELIPAPS (187 aa)) folds into the tr-type G domain. GTP is bound by residues 26–31 (DHGKST) and 147–150 (NKID).

It belongs to the TRAFAC class translation factor GTPase superfamily. Classic translation factor GTPase family. LepA subfamily.

Its subcellular location is the cell membrane. It catalyses the reaction GTP + H2O = GDP + phosphate + H(+). Its function is as follows. Required for accurate and efficient protein synthesis under certain stress conditions. May act as a fidelity factor of the translation reaction, by catalyzing a one-codon backward translocation of tRNAs on improperly translocated ribosomes. Back-translocation proceeds from a post-translocation (POST) complex to a pre-translocation (PRE) complex, thus giving elongation factor G a second chance to translocate the tRNAs correctly. Binds to ribosomes in a GTP-dependent manner. The chain is Elongation factor 4 from Corynebacterium efficiens (strain DSM 44549 / YS-314 / AJ 12310 / JCM 11189 / NBRC 100395).